The chain runs to 466 residues: Cysteine--tRNA ligase (466 aa).

A Zn(2+)-binding site is contributed by Cys28. The short motif at 30-40 (PTVYNYIHIGN) is the 'HIGH' region element. The Zn(2+) site is built by Cys208, His233, and Glu237. The 'KMSKS' region motif lies at 265–269 (KMSKS). Lys268 provides a ligand contact to ATP.

Belongs to the class-I aminoacyl-tRNA synthetase family. As to quaternary structure, monomer. It depends on Zn(2+) as a cofactor.

The protein resides in the cytoplasm. The catalysed reaction is tRNA(Cys) + L-cysteine + ATP = L-cysteinyl-tRNA(Cys) + AMP + diphosphate. This is Cysteine--tRNA ligase from Staphylococcus saprophyticus subsp. saprophyticus (strain ATCC 15305 / DSM 20229 / NCIMB 8711 / NCTC 7292 / S-41).